Reading from the N-terminus, the 284-residue chain is RNase adapter protein RapZ (284 aa).

Glycine 8–serine 15 serves as a coordination point for ATP. GTP is bound at residue aspartate 56–asparagine 59. The tract at residues arginine 266–serine 284 is RNA-binding.

This sequence belongs to the RapZ-like family. RapZ subfamily. As to quaternary structure, homotrimer.

Modulates the synthesis of GlmS, by affecting the processing and stability of the regulatory small RNA GlmZ. When glucosamine-6-phosphate (GlcN6P) concentrations are high in the cell, RapZ binds GlmZ and targets it to cleavage by RNase E. Consequently, GlmZ is inactivated and unable to activate GlmS synthesis. Under low GlcN6P concentrations, RapZ is sequestered and inactivated by an other regulatory small RNA, GlmY, preventing GlmZ degradation and leading to synthesis of GlmS. The sequence is that of RNase adapter protein RapZ from Erwinia tasmaniensis (strain DSM 17950 / CFBP 7177 / CIP 109463 / NCPPB 4357 / Et1/99).